A 1003-amino-acid chain; its full sequence is UPF0182 protein Mkms_1433 (1003 aa).

Helical transmembrane passes span 18 to 38, 63 to 83, 114 to 134, 176 to 196, 211 to 231, 260 to 280, and 288 to 308; these read VLIGVALAAVVLLLIGPRFID, VVVFLVVSLLIGAIVFAGLAL, LFGFGVPAFIGILSGIVAQSY, FVATFLAFIANLLGHYLFGGI, IQLVTLVGILILLKAFAYWLD, KLILLAIAVICAVAVFSAIVL, and IGVVLLLLSSLVVGAGWPLVV. Residues 902–937 show a composition bias toward low complexity; it reads ATGPAPANLPDGQPAAQPPNGQQPAAQTPGNQAGRA. The disordered stretch occupies residues 902-979; the sequence is ATGPAPANLP…MSGLQDAQRS (78 aa).

The protein belongs to the UPF0182 family.

It localises to the cell membrane. This is UPF0182 protein Mkms_1433 from Mycobacterium sp. (strain KMS).